The sequence spans 72 residues: Translation initiation factor IF-1 (72 aa).

Residues 1–72 (MPKEEVLEFP…TKGRITYRFK (72 aa)) form the S1-like domain.

This sequence belongs to the IF-1 family. As to quaternary structure, component of the 30S ribosomal translation pre-initiation complex which assembles on the 30S ribosome in the order IF-2 and IF-3, IF-1 and N-formylmethionyl-tRNA(fMet); mRNA recruitment can occur at any time during PIC assembly.

Its subcellular location is the cytoplasm. In terms of biological role, one of the essential components for the initiation of protein synthesis. Stabilizes the binding of IF-2 and IF-3 on the 30S subunit to which N-formylmethionyl-tRNA(fMet) subsequently binds. Helps modulate mRNA selection, yielding the 30S pre-initiation complex (PIC). Upon addition of the 50S ribosomal subunit IF-1, IF-2 and IF-3 are released leaving the mature 70S translation initiation complex. The chain is Translation initiation factor IF-1 from Rhizobium etli (strain ATCC 51251 / DSM 11541 / JCM 21823 / NBRC 15573 / CFN 42).